A 680-amino-acid chain; its full sequence is DNA ligase (680 aa).

NAD(+) is bound by residues 35-39 (DAQYD), 84-85 (SL), and E115. Residue K117 is the N6-AMP-lysine intermediate of the active site. Residues R138, E174, K291, and K315 each coordinate NAD(+). The Zn(2+) site is built by C419, C422, C437, and C442. A BRCT domain is found at 601 to 680 (NKNMPFSGME…REFINMLEQS (80 aa)).

Belongs to the NAD-dependent DNA ligase family. LigA subfamily. Requires Mg(2+) as cofactor. The cofactor is Mn(2+).

The enzyme catalyses NAD(+) + (deoxyribonucleotide)n-3'-hydroxyl + 5'-phospho-(deoxyribonucleotide)m = (deoxyribonucleotide)n+m + AMP + beta-nicotinamide D-nucleotide.. Functionally, DNA ligase that catalyzes the formation of phosphodiester linkages between 5'-phosphoryl and 3'-hydroxyl groups in double-stranded DNA using NAD as a coenzyme and as the energy source for the reaction. It is essential for DNA replication and repair of damaged DNA. The chain is DNA ligase from Dehalococcoides mccartyi (strain ATCC BAA-2100 / JCM 16839 / KCTC 5957 / BAV1).